Reading from the N-terminus, the 20-residue chain is 54 kDa cell wall protein (20 aa).

The segment at 1–20 is disordered; it reads KVPVDDQFRRVNNGGATDTR.

It is found in the secreted. It localises to the cell wall. The sequence is that of 54 kDa cell wall protein from Arabidopsis thaliana (Mouse-ear cress).